Here is a 424-residue protein sequence, read N- to C-terminus: UPF0053 protein MG146 homolog (424 aa).

Positions 6-191 (SGGLLALIII…EQNGLFTKED (186 aa)) constitute a CNNM transmembrane domain. Helical transmembrane passes span 7–27 (GGLLALIIISIILLACISAVV), 71–91 (LITILVANNIVAILVSNILFL), 101–121 (AISSALNLLISGVLLLMLCEI), and 135–155 (LVYFAVVVYFFYILFWPITKL). CBS domains follow at residues 210–270 (MIKW…NEPF) and 275–335 (LLYP…EHDE).

It belongs to the UPF0053 family.

Its subcellular location is the cell membrane. This Mycoplasma pneumoniae (strain ATCC 29342 / M129 / Subtype 1) (Mycoplasmoides pneumoniae) protein is UPF0053 protein MG146 homolog.